Reading from the N-terminus, the 104-residue chain is Pole-localizer protein TmaR (104 aa).

Coiled-coil stretches lie at residues 7 to 34 (IVNQ…NRKR) and 76 to 96 (SAEI…LTEE).

Belongs to the pole-localizer TmaR family.

It localises to the cytoplasm. Functionally, pole-localizer protein involved in the regulation of several cellular processes. The polypeptide is Pole-localizer protein TmaR (Vibrio campbellii (strain ATCC BAA-1116)).